Reading from the N-terminus, the 344-residue chain is Arginine N-succinyltransferase (344 aa).

Leu-125 provides a ligand contact to succinyl-CoA. His-229 serves as the catalytic Proton donor.

Belongs to the arginine N-succinyltransferase family.

The catalysed reaction is succinyl-CoA + L-arginine = N(2)-succinyl-L-arginine + CoA + H(+). Its pathway is amino-acid degradation; L-arginine degradation via AST pathway; L-glutamate and succinate from L-arginine: step 1/5. In terms of biological role, catalyzes the transfer of succinyl-CoA to arginine to produce N(2)-succinylarginine. This is Arginine N-succinyltransferase from Salmonella arizonae (strain ATCC BAA-731 / CDC346-86 / RSK2980).